Consider the following 73-residue polypeptide: Small proline-rich protein 2G (73 aa).

Residues 1–11 show a composition bias toward low complexity; that stretch reads MSYQQQQCKQP. A disordered region spans residues 1 to 20; it reads MSYQQQQCKQPCQPPPVCPT. 3 tandem repeats follow at residues 21-29, 30-38, and 39-47. The interval 21 to 47 is 3 X 9 AA approximate tandem repeats; sequence PKCPEPCPPPKCPEPYLPPPCPPEHCP.

The protein belongs to the cornifin (SPRR) family.

It localises to the cytoplasm. Functionally, cross-linked envelope protein of keratinocytes. It is a keratinocyte protein that first appears in the cell cytosol, but ultimately becomes cross-linked to membrane proteins by transglutaminase. All that results in the formation of an insoluble envelope beneath the plasma membrane. The sequence is that of Small proline-rich protein 2G (SPRR2G) from Homo sapiens (Human).